A 62-amino-acid polypeptide reads, in one-letter code: Large ribosomal subunit protein uL15 (62 aa).

It belongs to the universal ribosomal protein uL15 family.

This Candida albicans (Yeast) protein is Large ribosomal subunit protein uL15 (RPL28).